The chain runs to 911 residues: Alpha-actinin-4 (911 aa).

An actin-binding region spans residues M1–S269. The tract at residues Q12–G26 is interaction with VCL. Y31 is modified (phosphotyrosine). Residues R40–N61 form an interaction with VCL region. 2 consecutive Calponin-homology (CH) domains span residues K50–A154 and T163–S269. The short motif at L84–L88 is the LXXLL motif element. The interaction with VCL stretch occupies residues K108 to L126. K114 carries the post-translational modification N6-acetyllysine. The segment at T177–W192 is polyphosphoinositide (PIP2)-binding. N6-acetyllysine is present on K214. Position 249 is a phosphothreonine (T249). Spectrin repeat units lie at residues H293–N403, H413–K518, Q528–E639, and H649–N752. Residues K592 and K625 each carry the N6-acetyllysine modification. At S696 the chain carries Phosphoserine. The segment at W736–L911 is mediates interaction with MICALL2. 2 consecutive EF-hand domains span residues E765–D800 and Q806–D841. D778 serves as a coordination point for Ca(2+). K779 carries the post-translational modification N6-acetyllysine. Ca(2+) contacts are provided by D780 and E789. K859 carries the N6-acetyllysine modification. S909 carries the post-translational modification Phosphoserine.

This sequence belongs to the alpha-actinin family. As to quaternary structure, homodimer; antiparallel. Binds TRIM3 at the N-terminus. Interacts with MICALL2 (preferentially in opened conformation); stimulated by RAB13 activation. Identified in a complex with CASK, IQGAP1, MAGI2, NPHS1, SPTAN1 and SPTBN1. Identified in a IGF2BP1-dependent mRNP granule complex containing untranslated mRNAs. Component of the CART complex, at least composed of ACTN4, HGS/HRS, MYO5B and TRIM3. Interacts with MAGI1. Interacts with PDLIM2. Interacts with PPARG and RARA. Binds to VCL; this interaction triggers VCL conformational changes. Interacts with SEPTIN14. Interacts with IGSF8. Widely expressed.

It localises to the nucleus. Its subcellular location is the cytoplasm. The protein localises to the cell junction. It is found in the cytoskeleton. The protein resides in the stress fiber. It localises to the perinuclear region. In terms of biological role, F-actin cross-linking protein which is thought to anchor actin to a variety of intracellular structures. This is a bundling protein. Probably involved in vesicular trafficking via its association with the CART complex. The CART complex is necessary for efficient transferrin receptor recycling but not for EGFR degradation. Involved in tight junction assembly in epithelial cells probably through interaction with MICALL2. Links MICALL2 to the actin cytoskeleton and recruits it to the tight junctions. May also function as a transcriptional coactivator, stimulating transcription mediated by the nuclear hormone receptors PPARG and RARA. Association with IGSF8 regulates the immune synapse formation and is required for efficient T-cell activation. This Homo sapiens (Human) protein is Alpha-actinin-4.